The chain runs to 154 residues: Superoxide dismutase [Cu-Zn] (154 aa).

3 residues coordinate Cu cation: His-47, His-49, and His-64. Cys-58 and Cys-147 are disulfide-bonded. The Zn(2+) site is built by His-64, His-72, His-81, and Asp-84. His-121 serves as a coordination point for Cu cation. Residues 124 to 137 (TDDLGRGDSEESKK) are compositionally biased toward basic and acidic residues. A disordered region spans residues 124 to 144 (TDDLGRGDSEESKKTGNAGAR). A substrate-binding site is contributed by Arg-144.

The protein belongs to the Cu-Zn superoxide dismutase family. As to quaternary structure, homodimer. Requires Cu cation as cofactor. The cofactor is Zn(2+).

Its subcellular location is the cytoplasm. The enzyme catalyses 2 superoxide + 2 H(+) = H2O2 + O2. Destroys radicals which are normally produced within the cells and which are toxic to biological systems. In Emericella nidulans (strain FGSC A4 / ATCC 38163 / CBS 112.46 / NRRL 194 / M139) (Aspergillus nidulans), this protein is Superoxide dismutase [Cu-Zn] (sodA).